The following is a 30-amino-acid chain: Urease subunit alpha (30 aa).

It belongs to the metallo-dependent hydrolases superfamily. Urease alpha subunit family. Heterotrimer of UreA (gamma), UreB (beta) and UreC (alpha) subunits. Three heterotrimers associate to form the active enzyme. The cofactor is Ni cation.

It localises to the cytoplasm. The catalysed reaction is urea + 2 H2O + H(+) = hydrogencarbonate + 2 NH4(+). The protein operates within nitrogen metabolism; urea degradation; CO(2) and NH(3) from urea (urease route): step 1/1. The sequence is that of Urease subunit alpha (ureC) from Escherichia coli.